An 823-amino-acid chain; its full sequence is MGCAPSIHTSENRTFSHSDGEDEDVDVDVPGPAPRSIQRWSTAPGLVEPQPRDNGASKVSVADVQFGPMRFHQDQLQVLLVFTKEDSQCNGFHRACEKAGFKCTVTKEVQTVLTCFQDKLHDIIIIDHRYPRQMDAETLCRSIRSSKFSENTVIVGVVRRVDKEESSLMPFLAAGFTRRFIENPNVMACYNELLQLACGEVRSQLKLRACNSVFTALEKSQEAIEITSEDHIIQYANPAFESTMGYQSGELIGKELAQVPINEKKGDLLDAINSCVTVDKEWQGVYHTQKKNGDNIQQNVKIIPVIGQGGKIRHYVSIIRVCNGNNKVETTTECVQTDSQTDNQAGKHKDRRKHSMDAKAVSSRTSDVSSQRRHSSLARIHSMMIEAPITKVINIINAAQENSPVPVTEALNRVLDILRTTELYSPQFNAQDDPHATDLVGGLMSDGLRRFSGNEYILATKNLPPLSNNLATPVSLHDVPPRIALAIENEEQWDFDIFELEVATQNRPLIYLGLKTFARFGMCEFLQCSETTLRSWFQMIESNYHSSNPYHNSTHAADVLHATAYFLSRDKIKETLDRIDEVAALIAATVHDVDHPGRTNSFLCNAGNQLAVLYNDTAVLESHHVALAFQLTLENDQCNIFKQMERNDYRTLRQSIIDMVLATEMTKHFEHVNKFINSINKPLTAQESEEPDRSLEDIKAMLKTPESRALIKRMMIKCADVSNPCRPLEHCIEWAARISEEYFSQTDEEKQLDLPVVMPVFDRNTCSIPKSQISFIDYFITDMFDAWDAFVDLPNLMQHLDDNFRYWKGLDEKKLRSLRPPPE.

Positions 1–55 (MGCAPSIHTSENRTFSHSDGEDEDVDVDVPGPAPRSIQRWSTAPGLVEPQPRDNG) are disordered. The span at 10 to 19 (SENRTFSHSD) shows a compositional bias: basic and acidic residues. The PAS domain occupies 209–280 (ACNSVFTALE…AINSCVTVDK (72 aa)). A PAC domain is found at 283-325 (QGVYHTQKKNGDNIQQNVKIIPVIGQGGKIRHYVSIIRVCNGN). Positions 338 to 373 (DSQTDNQAGKHKDRRKHSMDAKAVSSRTSDVSSQRR) are disordered. Residue S355 is modified to Phosphoserine; by PKA. Phosphoserine occurs at positions 382 and 452. Y456 carries the phosphotyrosine modification. Residues 475–814 (SLHDVPPRIA…RYWKGLDEKK (340 aa)) form the PDEase domain. Catalysis depends on H551, which acts as the Proton donor. Residues H555, H591, D592, and D720 each coordinate a divalent metal cation.

Belongs to the cyclic nucleotide phosphodiesterase family. PDE8 subfamily. As to quaternary structure, interacts with RAF1. The interaction promotes RAF1 activity. The cofactor is a divalent metal cation. In terms of processing, phosphorylated at Ser-355 by PKA under elevated cAMP conditions, this enhances catalytic activity. In terms of tissue distribution, expressed in multiple tissues, with highest levels in testis, followed by liver, heart, skeletal muscle, and kidney. In the testis, expressed specifically in the seminiferous tubules, in postmitotic pachytene spermatocytes. Low expression, if any, in lung, smooth muscle, pancreas, thyroid, thymus, submaxillary gland, spleen, prostate, epididymus, uterus.

The catalysed reaction is 3',5'-cyclic AMP + H2O = AMP + H(+). It participates in purine metabolism; 3',5'-cyclic AMP degradation; AMP from 3',5'-cyclic AMP: step 1/1. With respect to regulation, inhibited by dipyridimole. Insensitive to selective PDE inhibitor rolipram and to the non-selective inhibitor, IBMX. Functionally, hydrolyzes the second messenger cAMP, which is a key regulator of many important physiological processes. May be involved in maintaining basal levels of the cyclic nucleotide and/or in the cAMP regulation of germ cell development. Binding to RAF1 reduces RAF1 'Ser-259' inhibitory-phosphorylation and stimulates RAF1-dependent EGF-activated ERK-signaling. Protects against cell death induced by hydrogen peroxide and staurosporine. The chain is High affinity cAMP-specific and IBMX-insensitive 3',5'-cyclic phosphodiesterase 8A (Pde8a) from Mus musculus (Mouse).